The sequence spans 264 residues: Tryptophan synthase alpha chain (264 aa).

Residues E49 and D60 each act as proton acceptor in the active site.

It belongs to the TrpA family. Tetramer of two alpha and two beta chains.

The enzyme catalyses (1S,2R)-1-C-(indol-3-yl)glycerol 3-phosphate + L-serine = D-glyceraldehyde 3-phosphate + L-tryptophan + H2O. It participates in amino-acid biosynthesis; L-tryptophan biosynthesis; L-tryptophan from chorismate: step 5/5. Functionally, the alpha subunit is responsible for the aldol cleavage of indoleglycerol phosphate to indole and glyceraldehyde 3-phosphate. The protein is Tryptophan synthase alpha chain of Geotalea daltonii (strain DSM 22248 / JCM 15807 / FRC-32) (Geobacter daltonii).